Here is a 316-residue protein sequence, read N- to C-terminus: ATP synthase gamma chain (316 aa).

It belongs to the ATPase gamma chain family. F-type ATPases have 2 components, CF(1) - the catalytic core - and CF(0) - the membrane proton channel. CF(1) has five subunits: alpha(3), beta(3), gamma(1), delta(1), epsilon(1). CF(0) has three main subunits: a, b and c.

It localises to the cellular thylakoid membrane. Produces ATP from ADP in the presence of a proton gradient across the membrane. The gamma chain is believed to be important in regulating ATPase activity and the flow of protons through the CF(0) complex. This is ATP synthase gamma chain from Prochlorococcus marinus (strain MIT 9303).